A 154-amino-acid polypeptide reads, in one-letter code: Endoribonuclease YbeY (154 aa).

Zn(2+) is bound by residues histidine 115, histidine 119, and histidine 125.

Belongs to the endoribonuclease YbeY family. Zn(2+) is required as a cofactor.

The protein localises to the cytoplasm. Its function is as follows. Single strand-specific metallo-endoribonuclease involved in late-stage 70S ribosome quality control and in maturation of the 3' terminus of the 16S rRNA. The sequence is that of Endoribonuclease YbeY from Halorhodospira halophila (strain DSM 244 / SL1) (Ectothiorhodospira halophila (strain DSM 244 / SL1)).